We begin with the raw amino-acid sequence, 160 residues long: Bcl-2-like gene 16 protein (160 aa).

The short motif at 64 to 84 (LLTTEHTTNWGKVVAMLSFSA) is the BH1 element.

The protein belongs to the Bcl-2 family.

This is Bcl-2-like gene 16 protein (16) from Saimiri sciureus (Common squirrel monkey).